Consider the following 113-residue polypeptide: Large ribosomal subunit protein bL17 (113 aa).

Belongs to the bacterial ribosomal protein bL17 family. Part of the 50S ribosomal subunit. Contacts protein L32.

This Syntrophomonas wolfei subsp. wolfei (strain DSM 2245B / Goettingen) protein is Large ribosomal subunit protein bL17.